We begin with the raw amino-acid sequence, 395 residues long: MDGGSGQPAADTEMTEAPGGFPAAAPSPQMPGIENIPATLSHGGRFIQYNIFGNIFEVTAKYKPPIMPIGKGAYGIVCSAMNSETNESVAIKKIANAFDNKIDAKRTLREIKLLRHMDHENIVAIRDIIPPPLRNAFNDVYIAYELMDTDLHQIIRSNQALSEEHCQYFLYQILRGLKYIHSANVLHRDLKPSNLLLNANCDLKICDFGLARVTSESDFMTEYVVTRWYRAPELLLNSSDYTAAIDVWSVGCIFMELMDRKPLFPGRDHVHQLRLLMELIGTPSEEELEFLNENAKRYIRQLPPYPRQSITDKFPTVHPLAIDLIEKMLTFDPRRRITVLDALAHPYLNSLHDISDEPECTIPFNFDFENHALSEEQMKELIYREALAFNPEYQQ.

Residues 1-35 are disordered; that stretch reads MDGGSGQPAADTEMTEAPGGFPAAAPSPQMPGIEN. Residues 17 to 27 show a composition bias toward low complexity; that stretch reads APGGFPAAAPS. The 286-residue stretch at 63 to 348 folds into the Protein kinase domain; the sequence is KPPIMPIGKG…VLDALAHPYL (286 aa). ATP is bound by residues 69–77 and Lys92; that span reads IGKGAYGIV. Residue Asp189 is the Proton acceptor of the active site. Thr221 carries the phosphothreonine modification. Residues 221–223 carry the TXY motif; the sequence is TEY. Phosphotyrosine is present on Tyr223. The residue at position 226 (Thr226) is a Phosphothreonine.

The protein belongs to the protein kinase superfamily. CMGC Ser/Thr protein kinase family. MAP kinase subfamily. In terms of assembly, interacts with MEKK1, MKK1 and MKK2. May form a ternary complex with MEKK1 and MKK1 or MKK2. Interacts with NDPK2, AP2C1, MKP1 and PTP1. Interacts with DSPTP1B/MKP2, especially during HR-like responses triggered by fungal elicitors. Interacts with MKK4, MKK5 and MKK6. Binds to LIP5. Interacts with VQ4 and IKU1/VQ14. Interacts with RACK1A, RACK1B and RACK1C. Interacts with PTP1. Interacts with FLZ9. Binds to BASL and YDA. Post-translationally, dually phosphorylated on Thr-221 and Tyr-223, which activates the enzyme. Dephosphorylated by DSPTP1B/MKP2.

The protein resides in the cytoplasm. The protein localises to the nucleus. It localises to the cell cortex. It catalyses the reaction L-seryl-[protein] + ATP = O-phospho-L-seryl-[protein] + ADP + H(+). It carries out the reaction L-threonyl-[protein] + ATP = O-phospho-L-threonyl-[protein] + ADP + H(+). Its activity is regulated as follows. Activated by threonine and tyrosine phosphorylation. Activated by the MAP kinase kinases MKK2, MKK3, MKK4, MKK5, MKK7 and MKK9. Activated in response to touch, wounding, low temperature, low humidity, salt stress, hydrogen peroxide, ozone, ACC (an ethylene precursor), jasmonic acid (JA), mastoparan and UVC. Activated in response to elicitors: oligogalacturonides, hexameric chitin fragments, fungal xylanase, and the bacterial flagellin and harpin. Activated upon Pseudomonas syringae pv. tomato DC3000 infection. Repressed by the protein phosphatase 2C AP2C1 and the protein-tyrosine-phosphatases MKP1 and PTP1. Repressed by DSPTP1B/MKP2-mediated dephosphorylation. Activated by polarized BASL. Triggered by MKKK20 in response to various abiotic stresses, including osmotic stress, cold and reactive oxygen species (ROS). Activated by MKK5 in response to abscisic acid (ABA). Functionally, mitogen-activated protein kinase (MAPK) which regulates abscisic acid (ABA) responses in a MAPKKK20-MKK5-MPK6 cascade involved in root growth (e.g. root cell division and elongation) and stomatal response. Involved in oxidative stress-mediated signaling cascade (such as ozone). Involved in the innate immune MAP kinase signaling cascade (MEKK1, MKK4/MKK5 and MPK3/MPK6) downstream of bacterial flagellin receptor FLS2. May be involved in hypersensitive response (HR)-mediated signaling cascade by modulating LIP5 phosphorylation and subsequent multivesicular bodies (MVBs) trafficking. May phosphorylate regulators of WRKY transcription factors. Phosphorylates 1-aminocyclopropane-1-carboxylic acid synthases (ACS2 and ACS6) and may be involved in the regulation of bacterial elicitor flagellin-induced ethylene production. Regulates locally gene-mediated and basal resistance response to certain pathogens. May be involved in the cold and salinity stress-mediated MAP kinase signaling cascade (MEKK1, MKK1/MKK2 and MPK4/MPK6). MKK1-MPK6 module mediates abscisic acid (ABA)-dependent CAT1 expression with H(2)O(2) production and response to drought and salt stress. MKK1-MPK6 module is also involved in sugar signaling during the process of seed germination. MKK3-MPK6 module plays an important role in the jasmonate signal transduction pathway through the negative regulation of MYC2/JIN1 expression. MKK9-MPK3/MPK6 module phosphorylates and activates EIN3, leading to the promotion of EIN3-mediated transcription in ethylene signaling. MPK3/MPK6 cascade regulates camalexin synthesis through transcriptional regulation of the biosynthetic genes after pathogen infection. MKK9-MPK6 module positively regulates leaf senescence. YDA-MKK4/MKK5-MPK3/MPK6 module regulates stomatal cell fate before the guard mother cell (GMC) is specified. When activated, reinforces the feedback loop by phosphorylating BASL, and inhibits stomatal fate by phosphorylating SPCH. This MAPK cascade also functions downstream of the ER receptor in regulating coordinated local cell proliferation, which shapes the morphology of plant organs. This Arabidopsis thaliana (Mouse-ear cress) protein is Mitogen-activated protein kinase 6.